A 297-amino-acid polypeptide reads, in one-letter code: Protein CANDIDATE G-PROTEIN COUPLED RECEPTOR 8 (297 aa).

A glycan (N-linked (GlcNAc...) asparagine) is linked at Asn20. Transmembrane regions (helical) follow at residues 34–54, 70–90, 107–127, 142–162, 180–200, 215–235, and 242–262; these read GFLH…YLAY, IMIA…AWCC, LTLF…AFLF, FLIS…FLFG, WGLW…VFLM, FYNY…ASAF, and FGFW…LPLL.

Belongs to the UPF0359 family.

The protein resides in the membrane. Functionally, G-protein coupled receptor. Plays a role in plants and microbes interactions. This is Protein CANDIDATE G-PROTEIN COUPLED RECEPTOR 8 from Arabidopsis thaliana (Mouse-ear cress).